Consider the following 405-residue polypeptide: L-carnitine CoA-transferase (405 aa).

CoA is bound by residues K97 and R104. Catalysis depends on D169, which acts as the Nucleophile.

This sequence belongs to the CoA-transferase III family. CaiB subfamily. Homodimer.

Its subcellular location is the cytoplasm. It carries out the reaction crotonobetainyl-CoA + (R)-carnitine = crotonobetaine + (R)-carnitinyl-CoA. The catalysed reaction is 4-(trimethylamino)butanoyl-CoA + (R)-carnitine = (R)-carnitinyl-CoA + 4-(trimethylamino)butanoate. It functions in the pathway amine and polyamine metabolism; carnitine metabolism. Catalyzes the reversible transfer of the CoA moiety from gamma-butyrobetainyl-CoA to L-carnitine to generate L-carnitinyl-CoA and gamma-butyrobetaine. Is also able to catalyze the reversible transfer of the CoA moiety from gamma-butyrobetainyl-CoA or L-carnitinyl-CoA to crotonobetaine to generate crotonobetainyl-CoA. In Escherichia coli O17:K52:H18 (strain UMN026 / ExPEC), this protein is L-carnitine CoA-transferase.